Here is a 187-residue protein sequence, read N- to C-terminus: MKISGVDIRPGNILEYEGGLWRAAKIQHTQPGKGGAYMQVEMKNLIDGRKTNVRFRSAETVERVRLDTKDFQYLFADGDMLTFMDKETYEQISLPKDLLGDAVAFLQDGMDVVMELYEEKPISVQLPEQVEAEIVEADAVVKGQTASSSYKPAILDNGVRVMVPPHITAGTRIIVDVNTQEYVKRAD.

Belongs to the elongation factor P family.

It localises to the cytoplasm. It participates in protein biosynthesis; polypeptide chain elongation. In terms of biological role, involved in peptide bond synthesis. Stimulates efficient translation and peptide-bond synthesis on native or reconstituted 70S ribosomes in vitro. Probably functions indirectly by altering the affinity of the ribosome for aminoacyl-tRNA, thus increasing their reactivity as acceptors for peptidyl transferase. The protein is Elongation factor P of Zymomonas mobilis subsp. mobilis (strain ATCC 31821 / ZM4 / CP4).